We begin with the raw amino-acid sequence, 901 residues long: Viral-enhancing factor (901 aa).

A Peptidase M60 domain is found at 27 to 330; the sequence is HRRTEVGVVL…IFTWLYNPQR (304 aa). N-linked (GlcNAc...) asparagine; by host glycans are attached at residues N65, N265, N339, N349, N540, N594, N595, N642, N683, and N698.

Functionally, involved in disruption of the peritrophic membrane and fusion of nucleocapsids with midgut cells. The sequence is that of Viral-enhancing factor (VEF) from Trichoplusia ni (Cabbage looper).